We begin with the raw amino-acid sequence, 206 residues long: dITP/XTP pyrophosphatase (206 aa).

Position 7 to 12 (7 to 12 (SNNAKK)) interacts with substrate. D72 (proton acceptor) is an active-site residue. Residue D72 participates in Mg(2+) binding. Substrate is bound by residues S73, 155-158 (FGYD), K182, and 187-188 (HR).

Belongs to the HAM1 NTPase family. Homodimer. Requires Mg(2+) as cofactor.

The enzyme catalyses XTP + H2O = XMP + diphosphate + H(+). It carries out the reaction dITP + H2O = dIMP + diphosphate + H(+). It catalyses the reaction ITP + H2O = IMP + diphosphate + H(+). Functionally, pyrophosphatase that catalyzes the hydrolysis of nucleoside triphosphates to their monophosphate derivatives, with a high preference for the non-canonical purine nucleotides XTP (xanthosine triphosphate), dITP (deoxyinosine triphosphate) and ITP. Seems to function as a house-cleaning enzyme that removes non-canonical purine nucleotides from the nucleotide pool, thus preventing their incorporation into DNA/RNA and avoiding chromosomal lesions. The chain is dITP/XTP pyrophosphatase from Corynebacterium glutamicum (strain ATCC 13032 / DSM 20300 / JCM 1318 / BCRC 11384 / CCUG 27702 / LMG 3730 / NBRC 12168 / NCIMB 10025 / NRRL B-2784 / 534).